Consider the following 147-residue polypeptide: 16 kDa phloem protein 2 (147 aa).

The C2 domain occupies 1–103; it reads MPHGTLEVVL…FVEGSIPPTA (103 aa). Ca(2+)-binding residues include D20, D26, D73, D75, and D81. A disordered region spans residues 126-147; it reads ENRSRGMDEESYGGWKNSEASY.

It depends on Ca(2+) as a cofactor.

In terms of biological role, binds to both sense and antisense RNA. Can also bind sheared DNA and dodecamer DNA with a low affinity. Interacts with mesophyll plasmodesmata to mediate its own cell-to-cell transport and potentiate RNA trafficking. May play a role in plant defense signaling. The sequence is that of 16 kDa phloem protein 2 from Arabidopsis thaliana (Mouse-ear cress).